Here is a 154-residue protein sequence, read N- to C-terminus: Lipoprotein signal peptidase (154 aa).

Transmembrane regions (helical) follow at residues 8 to 28 (AFFL…YWAL), 36 to 56 (IVVN…AFSF), 66 to 86 (WLFA…LLTK), and 88 to 108 (HHWL…GNLY). Residues aspartate 118 and aspartate 136 contribute to the active site. The chain crosses the membrane as a helical span at residues 129–149 (WPVFNLADVAITLGVILMLIA).

The protein belongs to the peptidase A8 family.

It localises to the cell inner membrane. It carries out the reaction Release of signal peptides from bacterial membrane prolipoproteins. Hydrolyzes -Xaa-Yaa-Zaa-|-(S,diacylglyceryl)Cys-, in which Xaa is hydrophobic (preferably Leu), and Yaa (Ala or Ser) and Zaa (Gly or Ala) have small, neutral side chains.. It functions in the pathway protein modification; lipoprotein biosynthesis (signal peptide cleavage). This protein specifically catalyzes the removal of signal peptides from prolipoproteins. In Dichelobacter nodosus (strain VCS1703A), this protein is Lipoprotein signal peptidase.